A 226-amino-acid chain; its full sequence is Enolase-phosphatase E1 (226 aa).

Positions 9 and 11 each coordinate Mg(2+). Substrate-binding positions include 115–116 (SS) and Lys160. Asp185 is a Mg(2+) binding site.

Belongs to the HAD-like hydrolase superfamily. MasA/MtnC family. As to quaternary structure, monomer. The cofactor is Mg(2+).

The protein resides in the cytoplasm. Its subcellular location is the nucleus. It carries out the reaction 5-methylsulfanyl-2,3-dioxopentyl phosphate + H2O = 1,2-dihydroxy-5-(methylsulfanyl)pent-1-en-3-one + phosphate. It participates in amino-acid biosynthesis; L-methionine biosynthesis via salvage pathway; L-methionine from S-methyl-5-thio-alpha-D-ribose 1-phosphate: step 3/6. It functions in the pathway amino-acid biosynthesis; L-methionine biosynthesis via salvage pathway; L-methionine from S-methyl-5-thio-alpha-D-ribose 1-phosphate: step 4/6. Functionally, bifunctional enzyme that catalyzes the enolization of 2,3-diketo-5-methylthiopentyl-1-phosphate (DK-MTP-1-P) into the intermediate 2-hydroxy-3-keto-5-methylthiopentenyl-1-phosphate (HK-MTPenyl-1-P), which is then dephosphorylated to form the acireductone 1,2-dihydroxy-3-keto-5-methylthiopentene (DHK-MTPene). The protein is Enolase-phosphatase E1 of Zygosaccharomyces rouxii (strain ATCC 2623 / CBS 732 / NBRC 1130 / NCYC 568 / NRRL Y-229).